The following is a 175-amino-acid chain: MRLSVCAAISHGRVFRRMGLGPESRIHLLRNLLTGLVRHERIEAPWARVDEMRGYAEKLIDYGKLGDTNERAMRMADFWLTEKDLIPKLFQVLAPRYKDQNGGYTRMRQIPNRSLDRAKMAVIEYKGNCLPPLPLPRRDSHLTLLNQLLQGLRQDLSQSQEASNHSSHTAQTPGI.

The transit peptide at 1 to 8 (MRLSVCAA) directs the protein to the mitochondrion. Positions 155–175 (DLSQSQEASNHSSHTAQTPGI) are disordered. The span at 157–175 (SQSQEASNHSSHTAQTPGI) shows a compositional bias: polar residues.

Belongs to the bacterial ribosomal protein bL17 family. Component of the mitochondrial ribosome large subunit (39S) which comprises a 16S rRNA and about 50 distinct proteins.

Its subcellular location is the mitochondrion. This Pongo abelii (Sumatran orangutan) protein is Large ribosomal subunit protein bL17m (MRPL17).